The chain runs to 210 residues: NEDD4 family-interacting protein 1-like (210 aa).

Residues 1–31 are disordered; sequence MAEPSGRYQQLPCEEEPEAGPQVAADAPPPY. At 1-105 the chain is on the cytoplasmic side; it reads MAEPSGRYQQ…ADQLRIGNDG (105 aa). Short sequence motifs (PPxY motif) lie at residues 30–33 and 53–56; these read PYSS and PPSY. The helical transmembrane segment at 106 to 126 threads the bilayer; it reads IFMLTFFMAFLFNWIGFFLSF. Over 127-132 the chain is Extracellular; sequence CLTTSA. Residues 133–153 form a helical membrane-spanning segment; it reads AGRYGAISGFGLSLIKWILIV. Over 154-161 the chain is Cytoplasmic; the sequence is RFSTYFPG. A helical membrane pass occupies residues 162–182; that stretch reads YFDGQYWLWWVFLVLGFLLFL. Over 183–210 the chain is Extracellular; sequence RGFINYAKIRKMADSFSTLPRTRVLFIY.

It is found in the golgi apparatus membrane. Functionally, may play a role in Golgi structure maintenance. This Danio rerio (Zebrafish) protein is NEDD4 family-interacting protein 1-like (ndfip1l).